The primary structure comprises 453 residues: Cytochrome P450 monooxygenase PC-20 (453 aa).

Transmembrane regions (helical) follow at residues leucine 5–isoleucine 25 and leucine 49–valine 69. Cysteine 387 is a binding site for heme.

Belongs to the cytochrome P450 family. Heme is required as a cofactor.

Its subcellular location is the membrane. It functions in the pathway secondary metabolite biosynthesis. Functionally, cytochrome P450 monooxygenase; part of the gene cluster that mediates the biosynthesis of the indole diterpenes penitrems. The geranylgeranyl diphosphate (GGPP) synthase penG catalyzes the first step in penitrem biosynthesis via conversion of farnesyl pyrophosphate and isopentyl pyrophosphate into geranylgeranyl pyrophosphate (GGPP). Condensation of indole-3-glycerol phosphate with GGPP by the prenyl transferase penC then forms 3-geranylgeranylindole (3-GGI). Epoxidation by the FAD-dependent monooxygenase penM leads to a epoxidized-GGI that is substrate of the terpene cyclase penB for cyclization to yield paspaline. Paspaline is subsequently converted to 13-desoxypaxilline by the cytochrome P450 monooxygenase penP, the latter being then converted to paxilline by the cytochrome P450 monooxygenase penQ. Paxilline is converted to beta-paxitriol via C-10 ketoreduction by the short-chain dehydrogenase PC-15 which can be monoprenylated at the C-20 by the indole diterpene prenyltransferase penD. A two-step elimination (acetylation and elimination) process performed by the O-acetyltransferase PC-16 and the P.simplicissimum ptmI-ortholog not yet identified in P.crustosum, leads to the production of the prenylated form of penijanthine. The FAD-linked oxidoreductase ptmO then converts the prenylated form of penijanthine into PC-M5 which is in turn transformed into PC-M4 by the aromatic dimethylallyltransferase PC-22. A series of oxidation steps involving 4 cytochrome P450 monooxygenases (PC-21, PC-05, PC-23, PC-20) and a FAD-dependent monooxygenase (PC-14) are required for the transformation of PC-M4 to penitrems A and E. Synthesis of these final products is proposed to proceed via penitrems D and C (PC-21, PC-05, PC-14) and penitrems B and F (PC-21, PC-05, PC-14, PC-23). The polypeptide is Cytochrome P450 monooxygenase PC-20 (Penicillium crustosum (Blue mold fungus)).